The chain runs to 463 residues: Chaperone SurA (463 aa).

The first 25 residues, 1–25 (MTKPFSVVLASLLAITSTISPLASA), serve as a signal peptide directing secretion. PpiC domains lie at 174–276 (GSKY…KLME) and 289–388 (VTEY…QRVG). Disordered stretches follow at residues 329 to 348 (ATAKESSEDTNSRGQGGDLG) and 434 to 463 (GDRADNNATAAPAKSADPALPAPPPAKPTR). A compositionally biased stretch (low complexity) spans 439–452 (NNATAAPAKSADPA). A compositionally biased stretch (pro residues) spans 453–463 (LPAPPPAKPTR).

It is found in the periplasm. The enzyme catalyses [protein]-peptidylproline (omega=180) = [protein]-peptidylproline (omega=0). Functionally, chaperone involved in the correct folding and assembly of outer membrane proteins. Recognizes specific patterns of aromatic residues and the orientation of their side chains, which are found more frequently in integral outer membrane proteins. May act in both early periplasmic and late outer membrane-associated steps of protein maturation. The protein is Chaperone SurA of Xanthomonas oryzae pv. oryzae (strain KACC10331 / KXO85).